Consider the following 494-residue polypeptide: 3-octaprenyl-4-hydroxybenzoate carboxy-lyase (494 aa).

Mn(2+) is bound at residue Asn-172. Residues 175–177, 189–191, and 194–195 each bind prenylated FMN; these read IYR, RWL, and RG. Glu-238 lines the Mn(2+) pocket. Residue Asp-294 is the Proton donor of the active site.

It belongs to the UbiD family. In terms of assembly, homohexamer. It depends on prenylated FMN as a cofactor. Mn(2+) serves as cofactor.

The protein resides in the cell membrane. It carries out the reaction a 4-hydroxy-3-(all-trans-polyprenyl)benzoate + H(+) = a 2-(all-trans-polyprenyl)phenol + CO2. It participates in cofactor biosynthesis; ubiquinone biosynthesis. Its function is as follows. Catalyzes the decarboxylation of 3-octaprenyl-4-hydroxy benzoate to 2-octaprenylphenol, an intermediate step in ubiquinone biosynthesis. This Janthinobacterium sp. (strain Marseille) (Minibacterium massiliensis) protein is 3-octaprenyl-4-hydroxybenzoate carboxy-lyase.